The following is an 814-amino-acid chain: Lon protease 1 (814 aa).

A compositionally biased stretch (basic and acidic residues) spans 1 to 17 (MTDDRDKTNEDPEKIIE). The tract at residues 1-28 (MTDDRDKTNEDPEKIIEADFNPEDPDDA) is disordered. The region spanning 49–245 (LPIIPLRPRP…KVLVLLKKEL (197 aa)) is the Lon N-terminal domain. 398–405 (GPPGVGKT) serves as a coordination point for ATP. The Lon proteolytic domain occupies 633-814 (EDVPGVVTGL…YRDVYQVAFG (182 aa)). Catalysis depends on residues Ser-721 and Lys-764.

The protein belongs to the peptidase S16 family. As to quaternary structure, homohexamer. Organized in a ring with a central cavity.

It localises to the cytoplasm. It catalyses the reaction Hydrolysis of proteins in presence of ATP.. Functionally, ATP-dependent serine protease that mediates the selective degradation of mutant and abnormal proteins as well as certain short-lived regulatory proteins. Required for cellular homeostasis and for survival from DNA damage and developmental changes induced by stress. Degrades polypeptides processively to yield small peptide fragments that are 5 to 10 amino acids long. Binds to DNA in a double-stranded, site-specific manner. This is Lon protease 1 from Syntrophotalea carbinolica (strain DSM 2380 / NBRC 103641 / GraBd1) (Pelobacter carbinolicus).